A 348-amino-acid polypeptide reads, in one-letter code: MEQFFWSYVWPALIMVGQSLLLLVCLLVAIAFLLLADRKVWAAVQLRRGPNVVGPFGLFQSFADLLKFILKEPVIPAGANKAVFLLAPLVAVTLALATYAVIPFADGWVVANINVGILYIFAISSLEVYGIIMGGWASNSKYPFLGALRSAAQMVSYEVSIGLVIVTVLLCVGSLNLTDIVLAQRTGLGTMMGLPASFLDWHWLSLFPMFIVFFISGLAETNRPPFDLPEAESELVAGHMVEYGSTPYMMFMLGEYAAIVLICCLTTILFLGGWLPIVDVWFLNWVPGIVWFALKGCMVFFMIALTKAFVPRYRYDQLMRLGWKVFLPLSLAMVVIVAFVLKLTGWAG.

9 consecutive transmembrane segments (helical) span residues 13 to 33 (LIMVGQSLLLLVCLLVAIAFL), 50 to 70 (PNVVGPFGLFQSFADLLKFIL), 82 to 102 (AVFLLAPLVAVTLALATYAVI), 115 to 135 (VGILYIFAISSLEVYGIIMGG), 161 to 181 (IGLVIVTVLLCVGSLNLTDIV), 198 to 218 (FLDWHWLSLFPMFIVFFISGL), 258 to 278 (AIVLICCLTTILFLGGWLPIV), 285 to 305 (WVPGIVWFALKGCMVFFMIAL), and 321 to 341 (LGWKVFLPLSLAMVVIVAFVL).

It belongs to the complex I subunit 1 family. NDH-1 is composed of 14 different subunits. Subunits NuoA, H, J, K, L, M, N constitute the membrane sector of the complex.

The protein localises to the cell inner membrane. The enzyme catalyses a quinone + NADH + 5 H(+)(in) = a quinol + NAD(+) + 4 H(+)(out). In terms of biological role, NDH-1 shuttles electrons from NADH, via FMN and iron-sulfur (Fe-S) centers, to quinones in the respiratory chain. The immediate electron acceptor for the enzyme in this species is believed to be ubiquinone. Couples the redox reaction to proton translocation (for every two electrons transferred, four hydrogen ions are translocated across the cytoplasmic membrane), and thus conserves the redox energy in a proton gradient. This subunit may bind ubiquinone. The chain is NADH-quinone oxidoreductase subunit H from Agrobacterium fabrum (strain C58 / ATCC 33970) (Agrobacterium tumefaciens (strain C58)).